The chain runs to 164 residues: Transcription elongation factor GreA (164 aa).

A coiled-coil region spans residues 50 to 75 (YHAAREEQGQQEARIRQLQDLLNIAK).

This sequence belongs to the GreA/GreB family.

Necessary for efficient RNA polymerase transcription elongation past template-encoded arresting sites. The arresting sites in DNA have the property of trapping a certain fraction of elongating RNA polymerases that pass through, resulting in locked ternary complexes. Cleavage of the nascent transcript by cleavage factors such as GreA or GreB allows the resumption of elongation from the new 3'terminus. GreA releases sequences of 2 to 3 nucleotides. The sequence is that of Transcription elongation factor GreA from Mycobacterium leprae (strain Br4923).